Consider the following 697-residue polypeptide: Protein no-on-transient A (697 aa).

Residues Met-1–Lys-29 show a composition bias toward polar residues. The tract at residues Met-1–Asp-253 is disordered. Over residues Asn-61–Gln-80 the composition is skewed to gly residues. 2 stretches are compositionally biased toward low complexity: residues Arg-102–Gln-118 and Ala-139–Ala-191. Gly residues predominate over residues Arg-195–Gly-223. Positions Gly-224–Gly-233 are enriched in basic and acidic residues. The segment covering Gly-234–Asn-246 has biased composition (gly residues). 2 consecutive RRM domains span residues Asn-285–Asn-357 and Thr-359–Asp-445. Residues Asp-488 to Thr-586 are a coiled coil. Positions Glu-551–Thr-565 are enriched in basic and acidic residues. Disordered regions lie at residues Glu-551–Glu-575 and Gln-601–Phe-697. Residues Gly-603 to Gly-622 are compositionally biased toward gly residues. 2 stretches are compositionally biased toward low complexity: residues Asn-623–Ser-635 and Gly-642–Asn-659.

Required for normal vision and courtship behavior in Drosophila. In Drosophila virilis (Fruit fly), this protein is Protein no-on-transient A (nonA).